A 379-amino-acid polypeptide reads, in one-letter code: Carbamoyl phosphate synthase small chain (379 aa).

The tract at residues 1 to 189 (MSKSALLVLE…GLPEAKDDSE (189 aa)) is CPSase. L-glutamine-binding residues include S47, G241, and G243. Residues 193–379 (HVVAYDFGAK…FIELIKQHSA (187 aa)) enclose the Glutamine amidotransferase type-1 domain. C269 serves as the catalytic Nucleophile. 5 residues coordinate L-glutamine: L270, Q273, N311, G313, and F314. Catalysis depends on residues H353 and E355.

This sequence belongs to the CarA family. As to quaternary structure, composed of two chains; the small (or glutamine) chain promotes the hydrolysis of glutamine to ammonia, which is used by the large (or ammonia) chain to synthesize carbamoyl phosphate. Tetramer of heterodimers (alpha,beta)4.

The catalysed reaction is hydrogencarbonate + L-glutamine + 2 ATP + H2O = carbamoyl phosphate + L-glutamate + 2 ADP + phosphate + 2 H(+). It carries out the reaction L-glutamine + H2O = L-glutamate + NH4(+). It participates in amino-acid biosynthesis; L-arginine biosynthesis; carbamoyl phosphate from bicarbonate: step 1/1. Its pathway is pyrimidine metabolism; UMP biosynthesis via de novo pathway; (S)-dihydroorotate from bicarbonate: step 1/3. Small subunit of the glutamine-dependent carbamoyl phosphate synthetase (CPSase). CPSase catalyzes the formation of carbamoyl phosphate from the ammonia moiety of glutamine, carbonate, and phosphate donated by ATP, constituting the first step of 2 biosynthetic pathways, one leading to arginine and/or urea and the other to pyrimidine nucleotides. The small subunit (glutamine amidotransferase) binds and cleaves glutamine to supply the large subunit with the substrate ammonia. The sequence is that of Carbamoyl phosphate synthase small chain from Vibrio vulnificus (strain YJ016).